A 367-amino-acid polypeptide reads, in one-letter code: Alanine racemase (367 aa).

Catalysis depends on Lys-40, which acts as the Proton acceptor; specific for D-alanine. Lys-40 carries the N6-(pyridoxal phosphate)lysine modification. Substrate is bound at residue Arg-136. Tyr-263 (proton acceptor; specific for L-alanine) is an active-site residue. Met-310 serves as a coordination point for substrate.

It belongs to the alanine racemase family. Requires pyridoxal 5'-phosphate as cofactor.

It carries out the reaction L-alanine = D-alanine. It functions in the pathway amino-acid biosynthesis; D-alanine biosynthesis; D-alanine from L-alanine: step 1/1. In terms of biological role, catalyzes the interconversion of L-alanine and D-alanine. May also act on other amino acids. The protein is Alanine racemase (alr) of Streptococcus suis (strain 98HAH33).